Consider the following 480-residue polypeptide: Plant UBX domain-containing protein 10 (480 aa).

Disordered stretches follow at residues 47 to 78 (DASS…PRGI) and 335 to 383 (ADQA…AARV). Residues 330 to 389 (RAALEADQAREQQRQEEKERLEREAAEAERKLKEEEEARERAAREAEERQAARVRMRQEK) adopt a coiled-coil conformation. The segment covering 336 to 383 (DQAREQQRQEEKERLEREAAEAERKLKEEEEARERAAREAEERQAARV) has biased composition (basic and acidic residues). The region spanning 399–477 (KGPDVTQVLV…GLHPQASLFI (79 aa)) is the UBX domain.

The chain is Plant UBX domain-containing protein 10 from Arabidopsis thaliana (Mouse-ear cress).